Consider the following 445-residue polypeptide: Phosphoglucosamine mutase (445 aa).

S99 acts as the Phosphoserine intermediate in catalysis. 4 residues coordinate Mg(2+): S99, D242, D244, and D246. A Phosphoserine modification is found at S99.

The protein belongs to the phosphohexose mutase family. The cofactor is Mg(2+). Activated by phosphorylation.

The catalysed reaction is alpha-D-glucosamine 1-phosphate = D-glucosamine 6-phosphate. In terms of biological role, catalyzes the conversion of glucosamine-6-phosphate to glucosamine-1-phosphate. The polypeptide is Phosphoglucosamine mutase (Sulfurovum sp. (strain NBC37-1)).